The following is a 440-amino-acid chain: MSEMTPREIVQELDKYIIGQSEAKRAVAIALRNRWRRGQVPPPLHQEITPKNILMIGPTGVGKTEIARRLAQLANAPFIKVEATKFTEVGYVGKDVESIIRDLTETAVDMIRNERQVALRQRAEELAEERILDILIPGPRDSSVPRSDEGTRQKFRKMLREGKLDAQEIEIEVSAPKGGVEIMAPAGMEEMTNQLREMFSNMAPGKTSTRRVTVSEAQRLLTDDEAAKLVNEEEVRALALERVQSGGIVFIDEIDKVAVRSGTQQGSDVSREGVQRDLLPLVEGSNVSTRYGVVKTDHILFIASGAFHLSKPSDLIPELQGRLPIRVELEALSAADLVRILQEPENALVRQYGALLASDGLALHFTQDGVQRIAEIAQQVNERVENIGARRLHTVMERLLEEVAFVAPDGSTTALEVDAAYVDSRLKDLAQDEDLSRYIL.

ATP is bound by residues Ile18, 60 to 65 (GVGKTE), Asp252, Glu318, and Arg390.

Belongs to the ClpX chaperone family. HslU subfamily. In terms of assembly, a double ring-shaped homohexamer of HslV is capped on each side by a ring-shaped HslU homohexamer. The assembly of the HslU/HslV complex is dependent on binding of ATP.

Its subcellular location is the cytoplasm. Functionally, ATPase subunit of a proteasome-like degradation complex; this subunit has chaperone activity. The binding of ATP and its subsequent hydrolysis by HslU are essential for unfolding of protein substrates subsequently hydrolyzed by HslV. HslU recognizes the N-terminal part of its protein substrates and unfolds these before they are guided to HslV for hydrolysis. The protein is ATP-dependent protease ATPase subunit HslU of Acidithiobacillus ferrooxidans (strain ATCC 23270 / DSM 14882 / CIP 104768 / NCIMB 8455) (Ferrobacillus ferrooxidans (strain ATCC 23270)).